The sequence spans 399 residues: 5'-C-glycyluridine monooxygenase-decarboxylase (399 aa).

Residue threonine 179 coordinates phosphate. Lysine 230 bears the N6-(pyridoxal phosphate)lysine mark. Residues arginine 318, arginine 322, arginine 353, and arginine 367 each contribute to the phosphate site.

Belongs to the SelA family. In terms of assembly, homooctamer; tetramer of homodimers. Requires pyridoxal 5'-phosphate as cofactor.

It carries out the reaction (5'S,6'R)-C-glycyluridine + O2 = uridine-5'-carboxamide + CO2 + H2O. It functions in the pathway antibiotic biosynthesis. Activity is dependent on phosphate. In terms of biological role, monooxygenase-decarboxylase involved in the biosynthesis of the capuramycin-type nucleoside antibiotic A-503083. Catalyzes the oxidative decarboxylation of 5'-C-glycyluridine (GlyU) to uridine-5'-carboxamide (CarU). Is stereospecific for the (5'S,6'R)-diastereomer of GlyU. Directly incorporates a single oxygen atom from O(2) into the product CarU. In Streptomyces sp, this protein is 5'-C-glycyluridine monooxygenase-decarboxylase.